Reading from the N-terminus, the 114-residue chain is DNA-directed RNA polymerases II, IV and V subunit 9A (114 aa).

The Zn(2+) site is built by Cys-7, Cys-10, Cys-29, Cys-32, Cys-76, Cys-79, Cys-103, and Cys-108. A TFIIS-type zinc finger spans residues 72–113 (KAVRCSKCQHREAVFFQATARGEEGMTLFFVCCNPNCGHRWR).

This sequence belongs to the archaeal RpoM/eukaryotic RPA12/RPB9/RPC11 RNA polymerase family. In terms of assembly, component of the RNA polymerase II, IV and V complexes. Interacts with NRPD1.

It is found in the nucleus. The protein localises to the nucleolus. Its function is as follows. DNA-dependent RNA polymerase catalyzes the transcription of DNA into RNA using the four ribonucleoside triphosphates as substrates. Component of RNA polymerase II which synthesizes mRNA precursors and many functional non-coding RNAs. Pol II is the central component of the basal RNA polymerase II transcription machinery. It is composed of mobile elements that move relative to each other. Component of RNA polymerases IV and V which mediate short-interfering RNAs (siRNA) accumulation and subsequent RNA-directed DNA methylation-dependent (RdDM) transcriptional gene silencing (TGS) of endogenous repeated sequences, including transposable elements. Required for RNA silencing. The polypeptide is DNA-directed RNA polymerases II, IV and V subunit 9A (NRPB9A) (Arabidopsis thaliana (Mouse-ear cress)).